Reading from the N-terminus, the 545-residue chain is Hydroxylamine reductase (545 aa).

[4Fe-4S] cluster contacts are provided by Cys-3, Cys-6, Cys-15, and Cys-21. His-240, Glu-264, Cys-309, Cys-401, Cys-429, Cys-454, Glu-488, and Lys-490 together coordinate hybrid [4Fe-2O-2S] cluster. Cys-401 carries the post-translational modification Cysteine persulfide.

Belongs to the HCP family. Requires [4Fe-4S] cluster as cofactor. Hybrid [4Fe-2O-2S] cluster is required as a cofactor.

The protein resides in the cytoplasm. It carries out the reaction A + NH4(+) + H2O = hydroxylamine + AH2 + H(+). In terms of biological role, catalyzes the reduction of hydroxylamine to form NH(3) and H(2)O. The sequence is that of Hydroxylamine reductase from Rippkaea orientalis (strain PCC 8801 / RF-1) (Cyanothece sp. (strain PCC 8801)).